A 351-amino-acid chain; its full sequence is Lipopolysaccharide core biosynthesis mannosyltransferase LpsB (351 aa).

The protein belongs to the glycosyltransferase group 1 family. Glycosyltransferase 4 subfamily.

Its pathway is bacterial outer membrane biogenesis; LPS core biosynthesis. Functionally, acts at transfer of mannose group to a 3-deoxy-D-mono octulonic acid (KDO) via an alpha-1,5 linkage. This is Lipopolysaccharide core biosynthesis mannosyltransferase LpsB (lpsB) from Rhizobium meliloti (strain 1021) (Ensifer meliloti).